Here is a 403-residue protein sequence, read N- to C-terminus: Phosphoglycerate kinase (403 aa).

Substrate is bound by residues 21 to 23 (DFN), R36, 59 to 62 (HLGR), R118, and R151. ATP contacts are provided by residues K202, E328, and 354 to 357 (GGDS).

Belongs to the phosphoglycerate kinase family. As to quaternary structure, monomer.

It is found in the cytoplasm. It carries out the reaction (2R)-3-phosphoglycerate + ATP = (2R)-3-phospho-glyceroyl phosphate + ADP. It participates in carbohydrate degradation; glycolysis; pyruvate from D-glyceraldehyde 3-phosphate: step 2/5. This Akkermansia muciniphila (strain ATCC BAA-835 / DSM 22959 / JCM 33894 / BCRC 81048 / CCUG 64013 / CIP 107961 / Muc) protein is Phosphoglycerate kinase.